Consider the following 477-residue polypeptide: Probable cytosolic Fe-S cluster assembly factor GL21135 (477 aa).

Positions 23, 69, 72, 75, 188, 244, 396, and 400 each coordinate [4Fe-4S] cluster.

It belongs to the NARF family.

Functionally, component of the cytosolic iron-sulfur (Fe/S) protein assembly machinery. Required for maturation of extramitochondrial Fe/S proteins. This chain is Probable cytosolic Fe-S cluster assembly factor GL21135, found in Drosophila persimilis (Fruit fly).